Here is a 1086-residue protein sequence, read N- to C-terminus: Rh5-interacting protein (1086 aa).

Positions 1-19 are cleaved as a signal peptide; sequence MFRIFFTLLIIILIKKTSA. N-linked (GlcNAc...) asparagine glycans are attached at residues Asn-103, Asn-144, Asn-228, Asn-303, Asn-334, Asn-480, Asn-498, Asn-506, Asn-526, and Asn-646. EGF-like domains are found at residues 287 to 321 and 325 to 362; these read RCTQDICSVNQFCDGENETCTCKTSLLPSAKNNCE and LCTVLNCPENSTCEQIGNGKKAECKCENGKYYHNNKCY. EGF-like domains follow at residues 636–675, 679–715, 719–753, 818–854, 858–897, 901–938, and 942–979; these read SCSNLCNKCHNNSTCYGNRFNYDCFCDNPYISKYGNKLCE, DCESVLCSQNQVCQILPNDKLICQCEEGYKNVKGKCV, KCDLSCPSNKVCVIENGKQTCKCSERFVLENGVCI, YCKDINCKENEECSIVNFKPECVCKENLKKNNKGECI, SCLINEGNCPKDSKCIYREYKPHECVCNKQGHVAVNGKCV, KCVHNKKCSENSICVNVMNKEPICVCTYNYYKKDGVCL, and PCLKDNGGCSRNSECTFKYSKINCTCKENYKNKDDSCV. N-linked (GlcNAc...) asparagine glycans are attached at residues Asn-964 and Asn-1021.

In terms of assembly, component of the PfRH5 adhesion complex composed of 1 copy of CyRPA, RH5 and RIPR; the complex is formed during merozoite invasion of host erythrocytes specifically at the interface between the parasite and host membranes. Within the complex, interacts with CyRPA. CyRPA recruitment of RIPR to RH5-P113-BSG leads to the formation of the PfRH5 adhesion complex which probably in turn releases RH5 from P113 while maintaining the interaction of the PfRH5 adhesion complex with BSG. In terms of processing, proteolytically cleaved into two chains of 125kDa and 65kDa which remain associated. The cleavage occurs at the schizont stage prior to the release of merozoites. Post-translationally, contains disulfide bonds.

Its subcellular location is the secreted. It localises to the cytoplasmic vesicle. The protein resides in the secretory vesicle. It is found in the microneme lumen. The protein localises to the cell membrane. Its subcellular location is the host cell membrane. Its function is as follows. Essential for the invasion of host erythrocytes by blood stage merozoites. As part of the PfRH5 adhesion complex, facilitates the interaction of RH5 and human BSG required for the Ca(2+) release into the erythrocyte. The polypeptide is Rh5-interacting protein (RIPR) (Plasmodium falciparum (isolate 3D7)).